We begin with the raw amino-acid sequence, 637 residues long: Glutamate--cysteine ligase catalytic subunit (637 aa).

Met-1 carries the post-translational modification N-acetylmethionine. Residues Ser-5 and Ser-8 each carry the phosphoserine modification.

This sequence belongs to the glutamate--cysteine ligase type 3 family. As to quaternary structure, heterodimer of a catalytic heavy chain and a regulatory light chain.

The catalysed reaction is L-cysteine + L-glutamate + ATP = gamma-L-glutamyl-L-cysteine + ADP + phosphate + H(+). It carries out the reaction (2S)-2-aminobutanoate + L-glutamate + ATP = gamma-L-glutamyl-(2S)-2-aminobutanoate + ADP + phosphate + H(+). It functions in the pathway sulfur metabolism; glutathione biosynthesis; glutathione from L-cysteine and L-glutamate: step 1/2. Feedback inhibition by glutathione. In terms of biological role, catalyzes the ATP-dependent ligation of L-glutamate and L-cysteine and participates in the first and rate-limiting step in glutathione biosynthesis. This is Glutamate--cysteine ligase catalytic subunit from Mus musculus (Mouse).